The primary structure comprises 295 residues: Nucleotide-binding protein LACR_1047 (295 aa).

Residue 12–19 participates in ATP binding; the sequence is GMSGAGKT. Residue 63–66 participates in GTP binding; the sequence is DMRS.

The protein belongs to the RapZ-like family.

Its function is as follows. Displays ATPase and GTPase activities. The chain is Nucleotide-binding protein LACR_1047 from Lactococcus lactis subsp. cremoris (strain SK11).